A 616-amino-acid polypeptide reads, in one-letter code: Chaperone protein HscA (616 aa).

This sequence belongs to the heat shock protein 70 family.

Its function is as follows. Chaperone involved in the maturation of iron-sulfur cluster-containing proteins. Has a low intrinsic ATPase activity which is markedly stimulated by HscB. Involved in the maturation of IscU. This chain is Chaperone protein HscA, found in Salmonella typhimurium (strain LT2 / SGSC1412 / ATCC 700720).